Reading from the N-terminus, the 233-residue chain is LexA repressor (233 aa).

Residues 26–46 (FDEMKDALDLRSKSGIHRLIT) constitute a DNA-binding region (H-T-H motif). Residues Ser154 and Lys192 each act as for autocatalytic cleavage activity in the active site.

The protein belongs to the peptidase S24 family. In terms of assembly, homodimer.

It catalyses the reaction Hydrolysis of Ala-|-Gly bond in repressor LexA.. Its function is as follows. Represses a number of genes involved in the response to DNA damage (SOS response), including recA and lexA. In the presence of single-stranded DNA, RecA interacts with LexA causing an autocatalytic cleavage which disrupts the DNA-binding part of LexA, leading to derepression of the SOS regulon and eventually DNA repair. In Nitrobacter hamburgensis (strain DSM 10229 / NCIMB 13809 / X14), this protein is LexA repressor.